The following is a 400-amino-acid chain: Acetate kinase (400 aa).

Asparagine 10 lines the Mg(2+) pocket. Lysine 17 is an ATP binding site. Arginine 91 provides a ligand contact to substrate. Aspartate 150 functions as the Proton donor/acceptor in the catalytic mechanism. Residues 210-214, 285-287, and 333-337 each bind ATP; these read HLGGG, DFR, and GIGEN. Residue glutamate 387 participates in Mg(2+) binding.

The protein belongs to the acetokinase family. In terms of assembly, homodimer. Requires Mg(2+) as cofactor. The cofactor is Mn(2+).

It is found in the cytoplasm. It catalyses the reaction acetate + ATP = acetyl phosphate + ADP. Its pathway is metabolic intermediate biosynthesis; acetyl-CoA biosynthesis; acetyl-CoA from acetate: step 1/2. Its function is as follows. Catalyzes the formation of acetyl phosphate from acetate and ATP. Can also catalyze the reverse reaction. In Buchnera aphidicola subsp. Baizongia pistaciae (strain Bp), this protein is Acetate kinase.